The sequence spans 465 residues: ATP-sulfurylase 3, chloroplastic (465 aa).

A chloroplast-targeting transit peptide spans 1-49 (MASMSTVFPKPTSFISQPLTKSHKSDSVTTSISFPSNSKTRSLRTISVR).

The protein belongs to the sulfate adenylyltransferase family. In terms of assembly, homotetramer.

The protein resides in the plastid. Its subcellular location is the chloroplast stroma. It carries out the reaction sulfate + ATP + H(+) = adenosine 5'-phosphosulfate + diphosphate. It functions in the pathway sulfur metabolism; hydrogen sulfide biosynthesis; sulfite from sulfate: step 1/3. This chain is ATP-sulfurylase 3, chloroplastic (APS3), found in Arabidopsis thaliana (Mouse-ear cress).